Reading from the N-terminus, the 469-residue chain is Argininosuccinate lyase (469 aa).

The protein belongs to the lyase 1 family. Argininosuccinate lyase subfamily.

The protein localises to the cytoplasm. The catalysed reaction is 2-(N(omega)-L-arginino)succinate = fumarate + L-arginine. It participates in amino-acid biosynthesis; L-arginine biosynthesis; L-arginine from L-ornithine and carbamoyl phosphate: step 3/3. This Paracoccus denitrificans (strain Pd 1222) protein is Argininosuccinate lyase.